We begin with the raw amino-acid sequence, 33 residues long: Toxin Bcg III 25.52 (33 aa).

Residues C6 and C28 are joined by a disulfide bond.

The protein localises to the secreted. It is found in the nematocyst. The chain is Toxin Bcg III 25.52 from Bunodosoma cangicum (Sea anemone).